The following is an 84-amino-acid chain: Mitochondrial import inner membrane translocase subunit Tim9 (84 aa).

The short motif at cysteine 28 to cysteine 52 is the Twin CX3C motif element. Intrachain disulfides connect cysteine 28-cysteine 52 and cysteine 32-cysteine 48.

Belongs to the small Tim family. In terms of assembly, heterohexamer; composed of 3 copies of TIMM9 and 3 copies of TIMM10/TIM10A, named soluble 70 kDa complex. The complex forms a 6-bladed alpha-propeller structure and associates with the TIMM22 component of the TIM22 complex. Interacts with multi-pass transmembrane proteins in transit.

Its subcellular location is the mitochondrion inner membrane. Mitochondrial intermembrane chaperone that participates in the import and insertion of multi-pass transmembrane proteins into the mitochondrial inner membrane. May also be required for the transfer of beta-barrel precursors from the TOM complex to the sorting and assembly machinery (SAM complex) of the outer membrane. Acts as a chaperone-like protein that protects the hydrophobic precursors from aggregation and guide them through the mitochondrial intermembrane space. The protein is Mitochondrial import inner membrane translocase subunit Tim9 (timm9) of Danio rerio (Zebrafish).